The chain runs to 207 residues: Methylated-DNA--protein-cysteine methyltransferase (207 aa).

DNA is bound by residues tyrosine 123 and arginine 137. Cysteine 154 (nucleophile; methyl group acceptor) is an active-site residue. Serine 160 provides a ligand contact to DNA.

The protein belongs to the MGMT family.

Its subcellular location is the nucleus. It carries out the reaction a 6-O-methyl-2'-deoxyguanosine in DNA + L-cysteinyl-[protein] = S-methyl-L-cysteinyl-[protein] + a 2'-deoxyguanosine in DNA. It catalyses the reaction a 4-O-methyl-thymidine in DNA + L-cysteinyl-[protein] = a thymidine in DNA + S-methyl-L-cysteinyl-[protein]. In terms of biological role, involved in the cellular defense against the biological effects of O6-methylguanine (O6-MeG) and O4-methylthymine (O4-MeT) in DNA. Repairs the methylated nucleobase in DNA by stoichiometrically transferring the methyl group to a cysteine residue in the enzyme. This is a suicide reaction: the enzyme is irreversibly inactivated. The sequence is that of Methylated-DNA--protein-cysteine methyltransferase (MGT1) from Candida glabrata (strain ATCC 2001 / BCRC 20586 / JCM 3761 / NBRC 0622 / NRRL Y-65 / CBS 138) (Yeast).